We begin with the raw amino-acid sequence, 546 residues long: Carboxypeptidase Y homolog A (546 aa).

The N-terminal stretch at 1–17 (MKLLASTVLMGAAAASI) is a signal peptide. A propeptide spanning residues 18-132 (APQQQVLKNP…KLEKYNMRAK (115 aa)) is cleaved from the precursor. Intrachain disulfides connect C186–C426, C320–C334, C344–C367, C351–C360, and C389–C396. N217 carries N-linked (GlcNAc...) asparagine glycosylation. The active site involves S273. D465 is a catalytic residue. An N-linked (GlcNAc...) asparagine glycan is attached at N512. H523 is an active-site residue.

This sequence belongs to the peptidase S10 family.

Its subcellular location is the vacuole. It catalyses the reaction Release of a C-terminal amino acid with broad specificity.. Functionally, vacuolar carboxypeptidase involved in degradation of small peptides. Digests preferentially peptides containing an aliphatic or hydrophobic residue in P1' position, as well as methionine, leucine or phenylalanine in P1 position of ester substrate. This Sclerotinia sclerotiorum (strain ATCC 18683 / 1980 / Ss-1) (White mold) protein is Carboxypeptidase Y homolog A (cpyA).